A 161-amino-acid chain; its full sequence is Eukaryotic translation initiation factor 5A-1 (161 aa).

Position 54 is a hypusine (lysine 54).

It belongs to the eIF-5A family. Post-translationally, lys-54 undergoes hypusination, a unique post-translational modification that consists in the addition of a butylamino group from spermidine to lysine side chain, leading to the formation of the unusual amino acid hypusine. eIF-5As are the only known proteins to undergo this modification, which is essential for their function. In terms of tissue distribution, expressed specifically in the germline in the distal region of gonads where germ cells actively proliferate.

The protein resides in the cytoplasm. Translation factor that promotes translation elongation and termination, particularly upon ribosome stalling at specific amino acid sequence contexts. Binds between the exit (E) and peptidyl (P) site of the ribosome and promotes rescue of stalled ribosome: specifically required for efficient translation of polyproline-containing peptides as well as other motifs that stall the ribosome. Acts as a ribosome quality control (RQC) cofactor by joining the RQC complex to facilitate peptidyl transfer during CAT tailing step. Required for mitotic germ cell proliferation, gametogenesis after entry into meiosis, and localization of the P granule component pgl-1 on P granules. The protein is Eukaryotic translation initiation factor 5A-1 (iff-1) of Caenorhabditis elegans.